The chain runs to 248 residues: Ubiquinone/menaquinone biosynthesis C-methyltransferase UbiE (248 aa).

Residues serine 68 and aspartate 92 each coordinate S-adenosyl-L-methionine.

The protein belongs to the class I-like SAM-binding methyltransferase superfamily. MenG/UbiE family.

It carries out the reaction a 2-demethylmenaquinol + S-adenosyl-L-methionine = a menaquinol + S-adenosyl-L-homocysteine + H(+). It catalyses the reaction a 2-methoxy-6-(all-trans-polyprenyl)benzene-1,4-diol + S-adenosyl-L-methionine = a 5-methoxy-2-methyl-3-(all-trans-polyprenyl)benzene-1,4-diol + S-adenosyl-L-homocysteine + H(+). Its pathway is quinol/quinone metabolism; menaquinone biosynthesis; menaquinol from 1,4-dihydroxy-2-naphthoate: step 2/2. The protein operates within cofactor biosynthesis; ubiquinone biosynthesis. Its function is as follows. Methyltransferase required for the conversion of demethylmenaquinol (DMKH2) to menaquinol (MKH2) and the conversion of 2-polyprenyl-6-methoxy-1,4-benzoquinol (DDMQH2) to 2-polyprenyl-3-methyl-6-methoxy-1,4-benzoquinol (DMQH2). This Rickettsia rickettsii (strain Iowa) protein is Ubiquinone/menaquinone biosynthesis C-methyltransferase UbiE.